We begin with the raw amino-acid sequence, 403 residues long: S-adenosylmethionine synthase (403 aa).

His-15 contacts ATP. Asp-17 lines the Mg(2+) pocket. Glu-43 serves as a coordination point for K(+). The L-methionine site is built by Glu-56 and Gln-99. A flexible loop region spans residues 99–109 (QSPHIAQGVDR). Residues 166–168 (DAK), 232–233 (KF), Asp-241, 247–248 (RK), Ala-264, and Lys-268 contribute to the ATP site. Asp-241 lines the L-methionine pocket. Lys-272 contacts L-methionine.

It belongs to the AdoMet synthase family. Homotetramer; dimer of dimers. Requires Mg(2+) as cofactor. K(+) serves as cofactor.

The protein localises to the cytoplasm. It catalyses the reaction L-methionine + ATP + H2O = S-adenosyl-L-methionine + phosphate + diphosphate. It participates in amino-acid biosynthesis; S-adenosyl-L-methionine biosynthesis; S-adenosyl-L-methionine from L-methionine: step 1/1. Its function is as follows. Catalyzes the formation of S-adenosylmethionine (AdoMet) from methionine and ATP. The overall synthetic reaction is composed of two sequential steps, AdoMet formation and the subsequent tripolyphosphate hydrolysis which occurs prior to release of AdoMet from the enzyme. The polypeptide is S-adenosylmethionine synthase (Stenotrophomonas maltophilia (strain K279a)).